The primary structure comprises 285 residues: MTTLTHRTRRTEVSKSCEKKIESEEDTNQERSPDNEDPGDSKDIRLTLMEEVLLLGLKDKEGYTSFWNDCISSGLRGGILIELAMRGRIYLEPPTMRKKRLLDRKVLLKSDSPTGDVLLDETLKHIKATEPTETVQTWIELLTGETWNPFKLQYQLRNVRERIAKNLVEKGILTTEKQNFLLFDMTTHPVTNTTEKQRLMKKLQDSVLERWVNDPQRMDRRTLALLVLAHSSDVLENVFSCLTDDKYDVAMNRTKDLVELDPEVEGTKHNATEMIWAVLAAFNKS.

The segment at 1-43 (MTTLTHRTRRTEVSKSCEKKIESEEDTNQERSPDNEDPGDSKD) is disordered. Residues 10-43 (RTEVSKSCEKKIESEEDTNQERSPDNEDPGDSKD) are compositionally biased toward basic and acidic residues. Tryptophan 67 and arginine 76 together coordinate a 1,2-diacyl-sn-glycero-3-phospho-(1D-myo-inositol 4-phosphate). Position 112 is a phosphoserine (serine 112). 2 residues coordinate a 1,2-diacyl-sn-glycero-3-phospho-(1D-myo-inositol 4-phosphate): arginine 157 and arginine 160. The tract at residues 176–187 (EKQNFLLFDMTT) is beta-hairpin required for oligomerization.

This sequence belongs to the GOLPH3/VPS74 family. As to quaternary structure, homooligomer. Does not interact MYO18; differs from GOLPH3 by its inability to interact with MYO18. May interact with ARF1.

It localises to the golgi apparatus. It is found in the golgi stack membrane. The protein localises to the trans-Golgi network membrane. Functionally, phosphatidylinositol-4-phosphate-binding protein that may antagonize the action of GOLPH3 which is required for the process of vesicle budding at the Golgi and anterograde transport to the plasma membrane. In Rattus norvegicus (Rat), this protein is Golgi phosphoprotein 3-like (Golph3l).